The chain runs to 338 residues: MTVLITGGTGFIGSHTAVSLVQSGYDAVILDNLCNSSAAVLPRLRQITGRNIPFYQGDIRDCQILRQIFSEHEIESVIHFAGLKAVGESVAEPTKYYGNNVYGSLVLAEEMARAGVLKIVFSSSATVYGDAEKVPYTEDMRPGDTANPYGASKAMVERMLTDIQKADPRWSVILLRYFNPIGAHESGLIGEQPNGVPNNLLPYICQVASGRLPQLSVFGGDYPTPDGTGMRDYIHVMDLAEGHIAAMKAKGGVAGVHLFNLGSGRAYSVLEIIRAFEAASGLHIPYRIQPRRAGDLACSYADPSHTKQQTGWETKRGLQQMMEDSWRWVSRNPGRYGD.

Residues 11 to 12 (FI), 31 to 36 (DNLCNS), 58 to 59 (DI), 80 to 84 (FAGLK), Asn-99, Ser-124, Tyr-149, Lys-153, and Phe-178 each bind NAD(+). Residues Ser-124 and Tyr-149 each contribute to the substrate site. Catalysis depends on Tyr-149, which acts as the Proton acceptor. Substrate is bound by residues Asn-179, 199 to 200 (NL), 216 to 218 (SVF), Arg-231, and 292 to 295 (RAGD).

Belongs to the NAD(P)-dependent epimerase/dehydratase family. Homodimer. It depends on NAD(+) as a cofactor.

It carries out the reaction UDP-alpha-D-glucose = UDP-alpha-D-galactose. The protein operates within carbohydrate metabolism; galactose metabolism. Its function is as follows. Involved in the metabolism of galactose. Plays an essential role in the incorporation of galactose into meningococcal lipopolysaccharide surface molecules, which are important for pathogenesis. Catalyzes the conversion of UDP-galactose (UDP-Gal) to UDP-glucose (UDP-Glc) through a mechanism involving the transient reduction of NAD. This chain is UDP-glucose 4-epimerase (galE), found in Neisseria gonorrhoeae.